Here is a 272-residue protein sequence, read N- to C-terminus: Type III pantothenate kinase (272 aa).

6–13 contacts ATP; it reads DVRNTHTV. 109–112 provides a ligand contact to substrate; it reads GADR. Residue D111 is the Proton acceptor of the active site. D131 contributes to the K(+) binding site. S134 is a binding site for ATP. T186 lines the substrate pocket.

Belongs to the type III pantothenate kinase family. In terms of assembly, homodimer. It depends on NH4(+) as a cofactor. K(+) serves as cofactor.

It localises to the cytoplasm. It carries out the reaction (R)-pantothenate + ATP = (R)-4'-phosphopantothenate + ADP + H(+). It functions in the pathway cofactor biosynthesis; coenzyme A biosynthesis; CoA from (R)-pantothenate: step 1/5. Its function is as follows. Catalyzes the phosphorylation of pantothenate (Pan), the first step in CoA biosynthesis. The polypeptide is Type III pantothenate kinase (Mycobacterium bovis (strain BCG / Pasteur 1173P2)).